A 168-amino-acid chain; its full sequence is Lipoprotein signal peptidase (168 aa).

3 consecutive transmembrane segments (helical) span residues 8–28 (LYYL…WLVV), 61–81 (GQFW…VIYI), and 91–111 (FGIA…DRIF). Active-site residues include Asp117 and Asp135. Residues 128-148 (FPIFNVADAALTIGVALMFIY) traverse the membrane as a helical segment.

This sequence belongs to the peptidase A8 family.

The protein localises to the cell membrane. It catalyses the reaction Release of signal peptides from bacterial membrane prolipoproteins. Hydrolyzes -Xaa-Yaa-Zaa-|-(S,diacylglyceryl)Cys-, in which Xaa is hydrophobic (preferably Leu), and Yaa (Ala or Ser) and Zaa (Gly or Ala) have small, neutral side chains.. It functions in the pathway protein modification; lipoprotein biosynthesis (signal peptide cleavage). This protein specifically catalyzes the removal of signal peptides from prolipoproteins. The sequence is that of Lipoprotein signal peptidase from Anoxybacillus flavithermus (strain DSM 21510 / WK1).